The chain runs to 88 residues: MGIARILSAVLFLSVLFVVTFPTLLSADHHDGRIDTCRLPSDRGRCKASFERWYFNGTTCTKFVYGGYGGNDNRFPTEKACMKRCVKA.

Positions 1 to 27 are cleaved as a signal peptide; sequence MGIARILSAVLFLSVLFVVTFPTLLSA. A propeptide spanning residues 28-33 is cleaved from the precursor; the sequence is DHHDGR. The region spanning 37 to 85 is the BPTI/Kunitz inhibitor domain; it reads CRLPSDRGRCKASFERWYFNGTTCTKFVYGGYGGNDNRFPTEKACMKRC. 2 cysteine pairs are disulfide-bonded: cysteine 37–cysteine 85 and cysteine 60–cysteine 81.

The protein belongs to the venom Kunitz-type family. 01 (intermediate) subfamily. As to expression, expressed by the venom gland.

It is found in the secreted. In terms of biological role, serine protease inhibitor that inhibits trypsin at a molar ratio of 1:1. The chain is Kunitz-type U15-theraphotoxin-Hhn1p from Cyriopagopus hainanus (Chinese bird spider).